Reading from the N-terminus, the 54-residue chain is Ribulose bisphosphate carboxylase large chain (54 aa).

The propeptide occupies 1–2 (MS). Pro-3 is modified (N-acetylproline). Lys-14 carries the N6,N6,N6-trimethyllysine modification.

This sequence belongs to the RuBisCO large chain family. Type I subfamily. As to quaternary structure, heterohexadecamer of 8 large chains and 8 small chains.

It localises to the plastid. Its subcellular location is the chloroplast. It carries out the reaction 2 (2R)-3-phosphoglycerate + 2 H(+) = D-ribulose 1,5-bisphosphate + CO2 + H2O. The catalysed reaction is D-ribulose 1,5-bisphosphate + O2 = 2-phosphoglycolate + (2R)-3-phosphoglycerate + 2 H(+). RuBisCO catalyzes two reactions: the carboxylation of D-ribulose 1,5-bisphosphate, the primary event in carbon dioxide fixation, as well as the oxidative fragmentation of the pentose substrate in the photorespiration process. Both reactions occur simultaneously and in competition at the same active site. The polypeptide is Ribulose bisphosphate carboxylase large chain (rbcL) (Colletia hystrix (Crucifixion thorn)).